The chain runs to 95 residues: Translation initiation factor IF-1 (95 aa).

Residues 1–72 (MAKEELIEMD…TKARITYRHK (72 aa)) enclose the S1-like domain. Positions 70–95 (RHKVGGPPGPVTGGGNRPPPRQPRRR) are disordered. Over residues 86–95 (RPPPRQPRRR) the composition is skewed to pro residues.

The protein belongs to the IF-1 family. As to quaternary structure, component of the 30S ribosomal translation pre-initiation complex which assembles on the 30S ribosome in the order IF-2 and IF-3, IF-1 and N-formylmethionyl-tRNA(fMet); mRNA recruitment can occur at any time during PIC assembly.

It is found in the cytoplasm. In terms of biological role, one of the essential components for the initiation of protein synthesis. Stabilizes the binding of IF-2 and IF-3 on the 30S subunit to which N-formylmethionyl-tRNA(fMet) subsequently binds. Helps modulate mRNA selection, yielding the 30S pre-initiation complex (PIC). Upon addition of the 50S ribosomal subunit IF-1, IF-2 and IF-3 are released leaving the mature 70S translation initiation complex. The sequence is that of Translation initiation factor IF-1 from Rhodospirillum rubrum (strain ATCC 11170 / ATH 1.1.1 / DSM 467 / LMG 4362 / NCIMB 8255 / S1).